The following is an 848-amino-acid chain: MNLEITGTSAEYWSDLAEALNTPMMKQFLTIKKDFPDTILFFRMGDFYEMFLEDAKIASSILDIALTKRQNAVPMCGIPYHSKDNYISRLLNAGKKIAICEQSKPEETGSKLMTRDVVRIITPGTVIEENLLTGFQNNYLAVLHLKKSLIYFAMADFSTGELFYSSTPITSLEKLVAELEKFRPSEICVPQSELSFFQELEYFRDKEFTVLKDQPEIPEKDQFQILSRYLDEYIRETYRDNKLVLREPRILSSGKFLEMDRETILNLELVENGKEKNHTLYSIFNFCNTAKGKRLLKQRILFPECDPMVLYSRWEKQDILFKIVLAPFIAALRDVGDIERILTRFRGNHSYPRDFRSILNSISTGIKLKKELEALSYPFLIPLEELKVLSEFIEERLHPGDDLPVILGNGPFLKTGFSTRLDKAREAGFKGKDWILSLEAEEKKRTNLNTLKIRYNKIVGYFIEISRAQAEQAPKDYLKKQTLVGSERFTTPKLEEIERTILEADEIIQEIERAEFNRMVEEVLKYSSALLSFSEEIGDLDFQISVLIAKDKFGWIRPELSKDRSLNLVDSRHPVVEATLPPGQEFVPNSVYLDTQNQAIAVLTGPNMAGKSTFMRQIALNQILFQMGAFVPAKSARLPIVDKLFTRIGAGDNLTAGESTFYVEMKETANILNHYTEDSLILFDEVGRGTSTYDGMSIAWSILEYLSSLSVKPKTIFATHYHELTELSRLSGIFNLYLETLEKEDKVLFLRKVKVGKAKKSFGIYVAKIAGIPEPIVKRAAELLIDLESKKKEIRIQEAQPTLFIEPESKNLPSETEESILKLKLEEMTPMEALKKLEDFQKKLRKQK.

605–612 (GPNMAGKS) provides a ligand contact to ATP.

The protein belongs to the DNA mismatch repair MutS family.

Functionally, this protein is involved in the repair of mismatches in DNA. It is possible that it carries out the mismatch recognition step. This protein has a weak ATPase activity. The sequence is that of DNA mismatch repair protein MutS from Leptospira borgpetersenii serovar Hardjo-bovis (strain JB197).